We begin with the raw amino-acid sequence, 60 residues long: Conotoxin VnMRCL-012 (60 aa).

A signal peptide spans 1-22; it reads MRCLPVFVILLLLIASAPGVDA. The propeptide occupies 23-50; sequence QPKTKYDVPLASRHDFAKKTPKRLSKPR.

This sequence belongs to the conotoxin T superfamily. Contains 2 disulfide bonds that can be either 'C1-C3, C2-C4' or 'C1-C4, C2-C3', since these disulfide connectivities have been observed for conotoxins with cysteine framework V (for examples, see AC P0DQQ7 and AC P81755). As to expression, expressed by the venom duct.

The protein resides in the secreted. The chain is Conotoxin VnMRCL-012 from Conus ventricosus (Mediterranean cone).